A 1372-amino-acid chain; its full sequence is DNA-directed RNA polymerase subunit beta' (1372 aa).

Zn(2+) contacts are provided by C69, C71, C84, and C87. The Mg(2+) site is built by D460, D462, and D464. Zn(2+) is bound by residues C808, C882, C889, and C892.

The protein belongs to the RNA polymerase beta' chain family. As to quaternary structure, the RNAP catalytic core consists of 2 alpha, 1 beta, 1 beta' and 1 omega subunit. When a sigma factor is associated with the core the holoenzyme is formed, which can initiate transcription. It depends on Mg(2+) as a cofactor. The cofactor is Zn(2+).

It catalyses the reaction RNA(n) + a ribonucleoside 5'-triphosphate = RNA(n+1) + diphosphate. Functionally, DNA-dependent RNA polymerase catalyzes the transcription of DNA into RNA using the four ribonucleoside triphosphates as substrates. This Rickettsia akari (strain Hartford) protein is DNA-directed RNA polymerase subunit beta'.